The chain runs to 860 residues: JmjC domain-containing histone demethylation protein 1 (860 aa).

3 disordered regions span residues 1-45, 117-212, and 408-440; these read MSEQ…EEGK, STSP…PKRK, and DVKE…GGEI. The segment at 23 to 116 adopts a PHD-type zinc-finger fold; the sequence is PEPCPLCRET…KWYCAPCLAR (94 aa). 2 stretches are compositionally biased toward basic and acidic residues: residues 183–192 and 408–433; these read IDMKSEREQQ and DVKE…HLTE. The JmjC domain occupies 416-579; sequence NDSREGSEIR…TQLRLRQIEI (164 aa). Substrate is bound at residue Thr-471. Residues His-474 and Asp-476 each contribute to the Fe cation site. Lys-491 contributes to the substrate binding site. His-547 serves as a coordination point for Fe cation. Disordered stretches follow at residues 744–795 and 837–860; these read HPPA…ANEN and GPKL…DIDH. Positions 750–763 are enriched in polar residues; that stretch reads ENRQSPQIETTTVQ. The span at 767–795 shows a compositional bias: low complexity; it reads PSTSSSDAISGSGPGASPGASANGGANEN.

The protein belongs to the JHDM1 histone demethylase family. Fe(2+) is required as a cofactor.

It is found in the nucleus. The catalysed reaction is N(6),N(6)-dimethyl-L-lysyl(36)-[histone H3] + 2 2-oxoglutarate + 2 O2 = L-lysyl(36)-[histone H3] + 2 formaldehyde + 2 succinate + 2 CO2. Histone demethylase that specifically demethylates 'Lys-36' of histone H3, thereby playing a central role in histone code. The chain is JmjC domain-containing histone demethylation protein 1 (JHD1) from Cryptococcus neoformans var. neoformans serotype D (strain JEC21 / ATCC MYA-565) (Filobasidiella neoformans).